We begin with the raw amino-acid sequence, 316 residues long: 4-hydroxy-3-methylbut-2-enyl diphosphate reductase (316 aa).

Cys-12 is a [4Fe-4S] cluster binding site. The (2E)-4-hydroxy-3-methylbut-2-enyl diphosphate site is built by His-41 and His-74. Dimethylallyl diphosphate is bound by residues His-41 and His-74. Isopentenyl diphosphate is bound by residues His-41 and His-74. Cys-96 serves as a coordination point for [4Fe-4S] cluster. His-124 provides a ligand contact to (2E)-4-hydroxy-3-methylbut-2-enyl diphosphate. His-124 contacts dimethylallyl diphosphate. His-124 contacts isopentenyl diphosphate. Glu-126 functions as the Proton donor in the catalytic mechanism. Thr-167 contacts (2E)-4-hydroxy-3-methylbut-2-enyl diphosphate. Cys-197 lines the [4Fe-4S] cluster pocket. Residues Ser-225, Ser-226, Asn-227, and Ser-269 each contribute to the (2E)-4-hydroxy-3-methylbut-2-enyl diphosphate site. Residues Ser-225, Ser-226, Asn-227, and Ser-269 each contribute to the dimethylallyl diphosphate site. The isopentenyl diphosphate site is built by Ser-225, Ser-226, Asn-227, and Ser-269.

Belongs to the IspH family. Homodimer. [4Fe-4S] cluster serves as cofactor.

The enzyme catalyses isopentenyl diphosphate + 2 oxidized [2Fe-2S]-[ferredoxin] + H2O = (2E)-4-hydroxy-3-methylbut-2-enyl diphosphate + 2 reduced [2Fe-2S]-[ferredoxin] + 2 H(+). The catalysed reaction is dimethylallyl diphosphate + 2 oxidized [2Fe-2S]-[ferredoxin] + H2O = (2E)-4-hydroxy-3-methylbut-2-enyl diphosphate + 2 reduced [2Fe-2S]-[ferredoxin] + 2 H(+). The protein operates within isoprenoid biosynthesis; dimethylallyl diphosphate biosynthesis; dimethylallyl diphosphate from (2E)-4-hydroxy-3-methylbutenyl diphosphate: step 1/1. Its pathway is isoprenoid biosynthesis; isopentenyl diphosphate biosynthesis via DXP pathway; isopentenyl diphosphate from 1-deoxy-D-xylulose 5-phosphate: step 6/6. Functionally, catalyzes the conversion of 1-hydroxy-2-methyl-2-(E)-butenyl 4-diphosphate (HMBPP) into a mixture of isopentenyl diphosphate (IPP) and dimethylallyl diphosphate (DMAPP). Acts in the terminal step of the DOXP/MEP pathway for isoprenoid precursor biosynthesis. This Salmonella schwarzengrund (strain CVM19633) protein is 4-hydroxy-3-methylbut-2-enyl diphosphate reductase.